The sequence spans 690 residues: Rho guanine nucleotide exchange factor 4 (690 aa).

The segment at 73-126 (KTQRKKLQKQAHVERRLHIGAVHKDGVKCWRKTIITSPESLNLPRRSHPLSQSA) is ABR (APC-binding region) domain. Residues 113 to 145 (LNLPRRSHPLSQSAPTGLNHMGWPEHTPGTAMP) form a disordered region. One can recognise an SH3 domain in the interval 194 to 253 (GSVVCAEALWDHVTMDDQELGFKAGDVIEVMDATNREWWWGRVADGEGWFPASFVRLRVN). A disordered region spans residues 257 to 282 (PADDDAPLAGNSGAEDGGAEAQSSKD). Residues 284 to 468 (MRTNVINEIL…KNVAQLINER (185 aa)) enclose the DH domain. One can recognise a PH domain in the interval 499-606 (ELIYSGELTR…WLKAFARERE (108 aa)).

In terms of assembly, isoform 3 interacts with RHOA and RAC1, and (via ABR domain) with APC. Found in a complex consisting of ARHGEF4, APC and CTNNB1. As to expression, expressed at high levels in the brain, skeletal muscle and testis and at low levels in the kidney, lung, small intestine, ovary and prostate. Expression is aberrantly enhanced in most colorectal tumors.

It localises to the cytoplasm. Its subcellular location is the cell projection. It is found in the ruffle membrane. Its function is as follows. Acts as a guanine nucleotide exchange factor (GEF) for RHOA, RAC1 and CDC42 GTPases. Binding of APC may activate RAC1 GEF activity. The APC-ARHGEF4 complex seems to be involved in cell migration as well as in E-cadherin-mediated cell-cell adhesion. Required for MMP9 up-regulation via the JNK signaling pathway in colorectal tumor cells. Involved in tumor angiogenesis and may play a role in intestinal adenoma formation and tumor progression. The protein is Rho guanine nucleotide exchange factor 4 (ARHGEF4) of Homo sapiens (Human).